Here is a 493-residue protein sequence, read N- to C-terminus: Aspartate-semialdehyde dehydrogenase (Non-phosphorylating) (493 aa).

Residues 160-161, 184-187, and 237-238 each bind NADP(+); these read WN, KPAH, and GS. E259 serves as the catalytic Proton acceptor. NADP(+) is bound at residue L260. C293 acts as the Nucleophile in catalysis. Residue E390 participates in NADP(+) binding.

The protein belongs to the aldehyde dehydrogenase family.

Its subcellular location is the cytoplasm. It catalyses the reaction L-aspartate 4-semialdehyde + NAD(+) + H2O = L-aspartate + NADH + 2 H(+). In terms of biological role, involved in the degradation of ectoine, which allows H.elongata to utilize ectoine as both a carbon and a nitrogen source for growth. Probably catalyzes the NAD(+)-dependent oxidation of L-aspartate-semialdehyde to L-aspartate. This chain is Aspartate-semialdehyde dehydrogenase (Non-phosphorylating), found in Halomonas elongata (strain ATCC 33173 / DSM 2581 / NBRC 15536 / NCIMB 2198 / 1H9).